Consider the following 179-residue polypeptide: MSKTLQSFNLLKWIDENKELLKPPVNNKVIWQDSEFIAMILGGPNRRRDFHVDPSDEFFYQIKGECYVECITEEGKREVVTVKEGDVFMLPAMVPHSPHRVANTYGLVIERKRSQGELEDFVWFCDECNHEMHRVRVQLSDIEKQVKEAIHSFNSNKEIRACKNCGHIMPEEVEEWKCE.

Arginine 47 is a binding site for O2. The Fe cation site is built by histidine 51, glutamate 57, and histidine 96. Glutamate 57 contacts substrate. Arginine 100 and glutamate 110 together coordinate substrate. 4 residues coordinate Fe cation: cysteine 125, cysteine 128, cysteine 162, and cysteine 165.

This sequence belongs to the 3-HAO family. Fe(2+) serves as cofactor.

The catalysed reaction is 3-hydroxyanthranilate + O2 = (2Z,4Z)-2-amino-3-carboxymuconate 6-semialdehyde. Its pathway is cofactor biosynthesis; NAD(+) biosynthesis; quinolinate from L-kynurenine: step 3/3. Its function is as follows. Catalyzes the oxidative ring opening of 3-hydroxyanthranilate to 2-amino-3-carboxymuconate semialdehyde, which spontaneously cyclizes to quinolinate. In Bacillus cereus (strain 03BB102), this protein is 3-hydroxyanthranilate 3,4-dioxygenase.